The primary structure comprises 211 residues: Putative 3-methyladenine DNA glycosylase (211 aa).

Belongs to the DNA glycosylase MPG family.

The polypeptide is Putative 3-methyladenine DNA glycosylase (Granulibacter bethesdensis (strain ATCC BAA-1260 / CGDNIH1)).